Here is a 395-residue protein sequence, read N- to C-terminus: Putative nickel insertion protein (395 aa).

It belongs to the LarC family.

This Archaeoglobus fulgidus (strain ATCC 49558 / DSM 4304 / JCM 9628 / NBRC 100126 / VC-16) protein is Putative nickel insertion protein.